We begin with the raw amino-acid sequence, 374 residues long: Ribosomal large subunit pseudouridine synthase D (374 aa).

Residues Met1 to Ser20 are disordered. The span at Asn8–Asp17 shows a compositional bias: acidic residues. The 74-residue stretch at Gly39 to Asp112 folds into the S4 RNA-binding domain. The active site involves Asp160.

The protein belongs to the pseudouridine synthase RluA family.

Its subcellular location is the cytoplasm. The enzyme catalyses uridine(1911/1915/1917) in 23S rRNA = pseudouridine(1911/1915/1917) in 23S rRNA. In terms of biological role, responsible for synthesis of pseudouridine from uracil at positions 1911, 1915 and 1917 in 23S ribosomal RNA. The sequence is that of Ribosomal large subunit pseudouridine synthase D (rluD) from Neisseria meningitidis serogroup A / serotype 4A (strain DSM 15465 / Z2491).